Reading from the N-terminus, the 530-residue chain is Methionine--tRNA ligase (530 aa).

The 'HIGH' region motif lies at tyrosine 18–serine 28. Residues cysteine 133, cysteine 136, cysteine 151, and histidine 154 each contribute to the Zn(2+) site. The short motif at lysine 307–serine 311 is the 'KMSKS' region element. Lysine 310 provides a ligand contact to ATP.

The protein belongs to the class-I aminoacyl-tRNA synthetase family. MetG type 2A subfamily. As to quaternary structure, monomer. Requires Zn(2+) as cofactor.

It localises to the cytoplasm. The enzyme catalyses tRNA(Met) + L-methionine + ATP = L-methionyl-tRNA(Met) + AMP + diphosphate. Is required not only for elongation of protein synthesis but also for the initiation of all mRNA translation through initiator tRNA(fMet) aminoacylation. The protein is Methionine--tRNA ligase of Nostoc sp. (strain PCC 7120 / SAG 25.82 / UTEX 2576).